The sequence spans 340 residues: uncharacterized protein (340 aa).

The segment at D284 to D340 is disordered. Polar residues-rich tracts occupy residues S286 to D303 and L320 to R334.

This is an uncharacterized protein from Mycoplasma genitalium (strain ATCC 33530 / DSM 19775 / NCTC 10195 / G37) (Mycoplasmoides genitalium).